Consider the following 297-residue polypeptide: N-acetylneuraminate lyase (297 aa).

Aceneuramate-binding residues include S47 and T48. The Proton donor role is filled by Y137. K165 acts as the Schiff-base intermediate with substrate in catalysis. The aceneuramate site is built by T167, G189, D191, E192, and S208.

It belongs to the DapA family. NanA subfamily. As to quaternary structure, homotetramer.

The protein localises to the cytoplasm. It carries out the reaction aceneuramate = aldehydo-N-acetyl-D-mannosamine + pyruvate. Its pathway is amino-sugar metabolism; N-acetylneuraminate degradation; D-fructose 6-phosphate from N-acetylneuraminate: step 1/5. Its function is as follows. Catalyzes the reversible aldol cleavage of N-acetylneuraminic acid (sialic acid; Neu5Ac) to form pyruvate and N-acetylmannosamine (ManNAc) via a Schiff base intermediate. The polypeptide is N-acetylneuraminate lyase (Salmonella paratyphi A (strain AKU_12601)).